The chain runs to 312 residues: Tumor necrosis factor receptor type 1-associated DEATH domain protein (312 aa).

The Nuclear export signal signature appears at 147–163 (LRDEELTELENALRNLT). The segment at 166–200 (SAGGQGSDVQGTPAPLQSLAPSPPEEKPPPPQPGQ) is disordered. The 91-residue stretch at 215 to 305 (NLQDQQKFAR…SLAEDLLGLA (91 aa)) folds into the Death domain. Residues 222 to 289 (FARSVGLKWR…ATLQRLVEAL (68 aa)) form an interaction with KRT14 and KRT18 region. Positions 231–244 (RKVGRSLQRSCRAL) match the Nuclear localization signal motif.

Stimulation of TNF-alpha receptor TNFRSF1A leads to the formation of two distinct signaling complexes. Plasma membrane-bound complex I is composed of TNFRSF1A, TRADD, RIPK1, TRAF2 and BIRC2/c-IAP1 or BIRC3 which interacts with CHUCK/IKK-alpha, IKBKB/IKK-beta and IKBKG/IKK-gamma promoting cell survival. Subsequently, TRADD, RIPK1 and TRAF2 dissociate from TNFRSF1A and form cytoplasmic complex II with FADD and caspase CASP8 promoting cell apoptosis. Within complex I, interacts with TNFRSF1A/TNFR1, TRAF2 and kinase RIPK1. Within complex I, interacts with TRPC4AP; the interaction promotes NF-kappa B activation. UXT1 associates with complex I; the interaction prevents the formation of complex II. Within complex I Interacts with scaffold protein DAB2IP. Interacts with autophagy receptor SQSTM1. Interacts with E3 ligase TRIP12. Interacts with kinase HIPK2. Interacts with keratin KRT14. Interacts with keratin KRT18. Interacts with keratins KRT16 and KRT17. Interacts with FADD. Interacts with TOMM70. Interacts with TMC8; the interaction impairs the formation of complex I and facilites complex II formation.

The protein localises to the nucleus. The protein resides in the cytoplasm. It is found in the cytoskeleton. Its function is as follows. Adapter molecule for TNFRSF1A/TNFR1 that specifically associates with the cytoplasmic domain of activated TNFRSF1A/TNFR1 mediating its interaction with FADD. Overexpression of TRADD leads to two major TNF-induced responses, apoptosis and activation of NF-kappa-B. The nuclear form acts as a tumor suppressor by preventing ubiquitination and degradation of isoform p19ARF/ARF of CDKN2A by TRIP12: acts by interacting with TRIP12, leading to disrupt interaction between TRIP12 and isoform p19ARF/ARF of CDKN2A. The polypeptide is Tumor necrosis factor receptor type 1-associated DEATH domain protein (Bos taurus (Bovine)).